The primary structure comprises 299 residues: MDLVLSAADYYFFTPYVYPATWPEDNIIRQTVSLLVVTNLGAYILYFFCATLSYYFVYDHSLMKHPQFLKNQVSREIMFTVKSLPWISIPTVSLFLLELRGYSKLYDDIGDFPNGWIHLIMSVISFLFFTDMLIYWIHRGLHHRLLYKHIHKPHHIWKIPTPFASHAFHPVDGFLQSLPYHIYPFVFPLHKVVYLGLYVLVNVWTISIHDGDFRVPQIFRPFINGSAHHTDHHMLFDYNYGQYFTLWDRIGGSFKHPSSFEGKGPHSYVKNMTEKESNSLAENGCKSKKLCNGEFTKNE.

3 helical membrane-spanning segments follow: residues 32 to 52 (VSLL…CATL), 79 to 99 (FTVK…LLEL), and 117 to 137 (IHLI…IYWI). Residues 124–252 (ISFLFFTDML…YFTLWDRIGG (129 aa)) enclose the Fatty acid hydroxylase domain. The Histidine box-1 motif lies at 138–143 (HRGLHH). Positions 151 to 155 (HKPHH) match the Histidine box-2 motif. The Histidine box-3 motif lies at 228-233 (HHTDHH). At serine 253 the chain carries Phosphoserine.

It belongs to the sterol desaturase family. Requires Fe cation as cofactor.

The protein localises to the endoplasmic reticulum membrane. The catalysed reaction is a Delta(7)-sterol + 2 Fe(II)-[cytochrome b5] + O2 + 2 H(+) = a Delta(5),Delta(7)-sterol + 2 Fe(III)-[cytochrome b5] + 2 H2O. It carries out the reaction lathosterol + 2 Fe(II)-[cytochrome b5] + O2 + 2 H(+) = 7-dehydrocholesterol + 2 Fe(III)-[cytochrome b5] + 2 H2O. The enzyme catalyses 5alpha-cholesta-7,24-dien-3beta-ol + 2 Fe(II)-[cytochrome b5] + O2 + 2 H(+) = 7-dehydrodesmosterol + 2 Fe(III)-[cytochrome b5] + 2 H2O. Its pathway is steroid biosynthesis; cholesterol biosynthesis. In terms of biological role, catalyzes the penultimate step of the biosynthesis of cholesterol, the dehydrogenation of lathosterol into 7-dehydrocholesterol (7-DHC). Cholesterol is the major sterol component in mammalian membranes and a precursor for bile acid and steroid hormone synthesis. In addition to its essential role in cholesterol biosynthesis, it also indirectly regulates ferroptosis through the production of 7-DHC. By diverting the spread of damage caused by peroxyl radicals from the phospholipid components to its sterol nucleus, 7-DHC prevents this form of cell death. The chain is Lathosterol oxidase from Rattus norvegicus (Rat).